We begin with the raw amino-acid sequence, 878 residues long: Alanine--tRNA ligase (878 aa).

4 residues coordinate Zn(2+): histidine 564, histidine 568, cysteine 666, and histidine 670.

This sequence belongs to the class-II aminoacyl-tRNA synthetase family. Homotetramer. Zn(2+) serves as cofactor.

The protein resides in the cytoplasm. The catalysed reaction is tRNA(Ala) + L-alanine + ATP = L-alanyl-tRNA(Ala) + AMP + diphosphate. Functionally, catalyzes the attachment of alanine to tRNA(Ala) in a two-step reaction: alanine is first activated by ATP to form Ala-AMP and then transferred to the acceptor end of tRNA(Ala). Also edits incorrectly charged Ser-tRNA(Ala) and Gly-tRNA(Ala) via its editing domain. The chain is Alanine--tRNA ligase from Buchnera aphidicola subsp. Acyrthosiphon pisum (strain APS) (Acyrthosiphon pisum symbiotic bacterium).